We begin with the raw amino-acid sequence, 1365 residues long: Histone-lysine N-methyltransferase NSD2 (1365 aa).

Residues Thr110 and Thr114 each carry the phosphothreonine modification. Ser121 carries the phosphoserine modification. The segment at 149–169 (ADVSQSEENEQKSDNKTRRNR) is disordered. Residue Ser172 is modified to Phosphoserine. Positions 222–286 (VGDLVWSKVS…FEKSLVAFEG (65 aa)) constitute a PWWP 1 domain. Disordered stretches follow at residues 373 to 455 (MVDS…RKGD), 513 to 567 (QSEE…DKTA), and 594 to 658 (CKPL…SKKS). Residue Ser376 is modified to Phosphoserine. A Phosphothreonine modification is found at Thr422. Positions 453–521 (KGDSAAQFLV…AQSEEDSGNG (69 aa)) form a DNA-binding region, HMG box. Residues 552 to 567 (DKHSLRKRETITDKTA) show a composition bias toward basic and acidic residues. Residues 603–623 (ASATASSALGFNKSSSPSASL) show a composition bias toward polar residues. The segment covering 632–648 (PGDEPSESPYESADETQ) has biased composition (acidic residues). PHD-type zinc fingers lie at residues 667 to 713 (EYVC…CASG), 714 to 770 (IHSC…CHAS), and 831 to 875 (VSWC…CRAG). The PWWP 2 domain maps to 880 to 942 (FQDIIWVKLG…QARVFPYMEG (63 aa)). The 51-residue stretch at 1011–1061 (SEIPKCNCKPTDENPCGSDSECLNRMLMFECHPQVCPAGEYCQNQCFTKRQ) folds into the AWS domain. The Zn(2+) site is built by Cys1016, Cys1018, Cys1026, Cys1032, Cys1041, Cys1046, and Cys1052. Positions 1063–1180 (PETKIIKTDG…AGTELTFNYN (118 aa)) constitute an SET domain. Residues Trp1075, 1115–1118 (THFY), and 1141–1142 (NH) each bind S-adenosyl-L-methionine. Residue Cys1144 participates in Zn(2+) binding. Asn1186 contacts S-adenosyl-L-methionine. The region spanning 1187-1203 (EKTVCRCGASNCSGFLG) is the Post-SET domain. Cys1191 is a Zn(2+) binding site. Arg1192 is an S-adenosyl-L-methionine binding site. Zn(2+)-binding residues include Cys1193 and Cys1198. The segment at 1206-1232 (PKTSASLSSEEKGKKAKKKTRRRRAKG) is disordered. A compositionally biased stretch (basic residues) spans 1219-1230 (KKAKKKTRRRRA). The PHD-type 4; atypical zinc finger occupies 1239 to 1286 (EDECFRCGDGGQLVLCDRKFCTKAYHLSCLGLGKRPFGKWECPWHHCD). The disordered stretch occupies residues 1329-1365 (RADSSSSTKTEKPFPESLKSKGKRKKRRCWRRVTDGK). The segment covering 1348 to 1359 (SKGKRKKRRCWR) has biased composition (basic residues).

It belongs to the class V-like SAM-binding methyltransferase superfamily. Histone-lysine methyltransferase family. SET2 subfamily. As to quaternary structure, interacts with HDAC1. Interacts (via PHD-type zinc fingers 1, 2 and 3) with SALL1. Interacts (via PHD-type 1, 2 and 3) with SALL4. Interacts with NANOG. Interacts with OGT. Interacts (via HMG box) with NKX2-5. During B-cell development, expressed in early B2 cell progenitors (pre- and pro-B cells) with a decrease in expression at later stages.

The protein resides in the nucleus. Its subcellular location is the chromosome. The catalysed reaction is L-lysyl(36)-[histone H3] + S-adenosyl-L-methionine = N(6)-methyl-L-lysyl(36)-[histone H3] + S-adenosyl-L-homocysteine + H(+). The enzyme catalyses L-lysyl(36)-[histone H3] + 2 S-adenosyl-L-methionine = N(6),N(6)-dimethyl-L-lysyl(36)-[histone H3] + 2 S-adenosyl-L-homocysteine + 2 H(+). Histone methyltransferase which specifically dimethylates nucleosomal histone H3 at 'Lys-36' (H3K36me2). Also monomethylates nucleosomal histone H3 at 'Lys-36' (H3K36me) in vitro. Does not trimethylate nucleosomal histone H3 at 'Lys-36' (H3K36me3). However, specifically trimethylates histone H3 at 'Lys-36' (H3K36me3) at euchromatic regions in embryonic stem (ES) cells. By methylating histone H3 at 'Lys-36', involved in the regulation of gene transcription during various biological processes. In ES cells, associates with developmental transcription factors such as SALL1 and represses inappropriate gene transcription mediated by histone deacetylation. During heart development, associates with transcription factor NKX2-5 to repress transcription of NKX2-5 target genes. Plays an essential role in adipogenesis, by regulating expression of genes involved in pre-adipocyte differentiation. During T-cell receptor (TCR) and CD28-mediated T-cell activation, promotes the transcription of transcription factor BCL6 which is required for follicular helper T (Tfh) cell differentiation. During B-cell development, required for the generation of the B1 lineage. During B2 cell activation, may contribute to the control of isotype class switch recombination (CRS), splenic germinal center formation, and the humoral immune response. Plays a role in class switch recombination of the immunoglobulin heavy chain (IgH) locus during B-cell activation. By regulating the methylation of histone H3 at 'Lys-36' and histone H4 at 'Lys-20' at the IgH locus, involved in TP53BP1 recruitment to the IgH switch region and promotes the transcription of IgA. Its function is as follows. Histone methyltransferase which specifically dimethylates nucleosomal histone H3 at 'Lys-36' (H3K36me2). Mono-, di- and tri-methylates histone H3 at 'Lys-27' (H3K27me, H3K27me2, H3K27me3). Methylation of histone H3 at 'Lys-27' is controversial. May act as a transcription regulator that binds DNA and suppresses IL5 transcription through HDAC recruitment. This is Histone-lysine N-methyltransferase NSD2 (Nsd2) from Mus musculus (Mouse).